The following is a 405-amino-acid chain: G1/S-specific cyclin-D (405 aa).

In terms of domain architecture, Cyclin N-terminal spans 76-200; it reads FYNCMEYEEA…LIVTTLQWET (125 aa). A disordered region spans residues 301-405; it reads YTSEDAEKTE…STPPKIFKTL (105 aa). Residues 311 to 321 show a composition bias toward polar residues; it reads PTPSAPASTQE. The segment covering 326–335 has biased composition (basic and acidic residues); it reads QELKELKEEP. Over residues 358–380 the composition is skewed to polar residues; it reads SEQTPSTPLNDSGFSSDVSSPAS.

Belongs to the cyclin family. Cyclin D subfamily. Interacts with cdk-4; the interaction is likely involved in regulating cdk-4 activity.

In terms of biological role, in association with cdk-4, regulates the progression through the G1 phase of the cell cycle during postembryonic development. Regulates proliferation of the coelomocyte lineage and intestinal cells during late embryogenesis. In complex with cdk-4, involved in sex determination during gonadogenesis by regulating the asymmetric division of the somatic gonadal precursor cell (SGP). In Caenorhabditis elegans, this protein is G1/S-specific cyclin-D.